Here is a 2226-residue protein sequence, read N- to C-terminus: Rotatin (2226 aa).

The segment at 295-346 (EARGPYHSPNPSPGSSSSRPSVVGRTGQRPRGDGQDWDAVSSSGSSSHTHVN) is disordered. Positions 307-319 (PGSSSSRPSVVGR) are enriched in low complexity. Position 311 is a phosphoserine (serine 311). Lysine 813 carries the post-translational modification N6-acetyllysine.

Belongs to the rotatin family. In terms of assembly, interacts with PPP1R35; this interaction allows the mutual recruitment to the centriole.

It localises to the cytoplasm. Its subcellular location is the cytoskeleton. It is found in the cilium basal body. Involved in the genetic cascade that governs left-right specification. Required for correct asymmetric expression of NODAL, LEFTY and PITX2. The polypeptide is Rotatin (Mus musculus (Mouse)).